The sequence spans 300 residues: Geranylgeranyl pyrophosphate synthase (300 aa).

Met1 is subject to N-acetylmethionine. Lys25, Arg28, and His57 together coordinate isopentenyl diphosphate. Residues Asp64 and Asp68 each coordinate Mg(2+). Arg73 contributes to the dimethylallyl diphosphate binding site. Residue Arg74 participates in isopentenyl diphosphate binding. Residues Lys151, Thr152, Gln185, Lys202, and Lys212 each contribute to the dimethylallyl diphosphate site.

This sequence belongs to the FPP/GGPP synthase family. Homohexamer; trimer of homodimers. Mg(2+) serves as cofactor.

Its subcellular location is the cytoplasm. The protein resides in the perinuclear region. The protein localises to the myofibril. It is found in the sarcomere. It localises to the z line. The catalysed reaction is isopentenyl diphosphate + dimethylallyl diphosphate = (2E)-geranyl diphosphate + diphosphate. It carries out the reaction isopentenyl diphosphate + (2E)-geranyl diphosphate = (2E,6E)-farnesyl diphosphate + diphosphate. It catalyses the reaction isopentenyl diphosphate + (2E,6E)-farnesyl diphosphate = (2E,6E,10E)-geranylgeranyl diphosphate + diphosphate. Its pathway is isoprenoid biosynthesis; farnesyl diphosphate biosynthesis; farnesyl diphosphate from geranyl diphosphate and isopentenyl diphosphate: step 1/1. It participates in isoprenoid biosynthesis; geranyl diphosphate biosynthesis; geranyl diphosphate from dimethylallyl diphosphate and isopentenyl diphosphate: step 1/1. The protein operates within isoprenoid biosynthesis; geranylgeranyl diphosphate biosynthesis; geranylgeranyl diphosphate from farnesyl diphosphate and isopentenyl diphosphate: step 1/1. Catalyzes the trans-addition of the three molecules of IPP onto DMAPP to form geranylgeranyl pyrophosphate, an important precursor of carotenoids and geranylated proteins. This Bos taurus (Bovine) protein is Geranylgeranyl pyrophosphate synthase (GGPS1).